The chain runs to 59 residues: Large ribosomal subunit protein bL32 (59 aa).

Residues 1–59 (MAVQQNKKSPSKRGMHRSHDFLTNPPLAVEPTSGEIHLRHHVSPNGYYRGRKVLPAKGE) are disordered. Over residues 49-59 (RGRKVLPAKGE) the composition is skewed to basic residues.

Belongs to the bacterial ribosomal protein bL32 family.

This Methylobacillus flagellatus (strain ATCC 51484 / DSM 6875 / VKM B-1610 / KT) protein is Large ribosomal subunit protein bL32.